The chain runs to 83 residues: MSFFQLLMKRKELIPLVVFMTVAAGGASSFAVYSLWKTDVILDRKKNPEPWETVDPTVPQKLITINQQWKPIEELQNVQRVTK.

This sequence belongs to the complex I NDUFA4 subunit family. In terms of tissue distribution, expressed mainly in stomach, placenta, small intestine and colon, as well as in normal mucosa of esophagus. Down-regulated in esophageal squamous cell carcinoma.

The protein resides in the nucleus. This chain is Normal mucosa of esophagus-specific gene 1 protein (NMES1), found in Homo sapiens (Human).